Consider the following 156-residue polypeptide: SsrA-binding protein (156 aa).

A disordered region spans residues 134 to 156; that stretch reads RQTLREQQDKRESLRELRERNRR.

Belongs to the SmpB family.

It is found in the cytoplasm. Its function is as follows. Required for rescue of stalled ribosomes mediated by trans-translation. Binds to transfer-messenger RNA (tmRNA), required for stable association of tmRNA with ribosomes. tmRNA and SmpB together mimic tRNA shape, replacing the anticodon stem-loop with SmpB. tmRNA is encoded by the ssrA gene; the 2 termini fold to resemble tRNA(Ala) and it encodes a 'tag peptide', a short internal open reading frame. During trans-translation Ala-aminoacylated tmRNA acts like a tRNA, entering the A-site of stalled ribosomes, displacing the stalled mRNA. The ribosome then switches to translate the ORF on the tmRNA; the nascent peptide is terminated with the 'tag peptide' encoded by the tmRNA and targeted for degradation. The ribosome is freed to recommence translation, which seems to be the essential function of trans-translation. This chain is SsrA-binding protein, found in Paenarthrobacter aurescens (strain TC1).